We begin with the raw amino-acid sequence, 266 residues long: Flavin-dependent thymidylate synthase (266 aa).

One can recognise a ThyX domain in the interval 11–222; the sequence is GFIRLVDYMG…PLACASFERH (212 aa). FAD contacts are provided by residues S57, 80-82, and E88; that span reads RHR. DUMP contacts are provided by residues 77-80, 88-92, and R161; these read QWIR and EISGR. A ThyX motif motif is present at residues 80–90; the sequence is RHRTARLNEIS. Residues 177–179 and H183 each bind FAD; that span reads DLH. R188 provides a ligand contact to dUMP. The active-site Involved in ionization of N3 of dUMP, leading to its activation is R188.

The protein belongs to the thymidylate synthase ThyX family. In terms of assembly, homotetramer. It depends on FAD as a cofactor.

The enzyme catalyses dUMP + (6R)-5,10-methylene-5,6,7,8-tetrahydrofolate + NADPH + H(+) = dTMP + (6S)-5,6,7,8-tetrahydrofolate + NADP(+). It participates in pyrimidine metabolism; dTTP biosynthesis. Its function is as follows. Catalyzes the reductive methylation of 2'-deoxyuridine-5'-monophosphate (dUMP) to 2'-deoxythymidine-5'-monophosphate (dTMP) while utilizing 5,10-methylenetetrahydrofolate (mTHF) as the methyl donor, and NADPH and FADH(2) as the reductant. In Treponema denticola (strain ATCC 35405 / DSM 14222 / CIP 103919 / JCM 8153 / KCTC 15104), this protein is Flavin-dependent thymidylate synthase.